The chain runs to 214 residues: Adenylate kinase (214 aa).

10–15 (GAGKGT) contacts ATP. Residues 30–59 (STGDIFRANIKNGTELGKKAKTYMDQGALV) are NMP. Residues threonine 31, arginine 36, 57–59 (ALV), 85–88 (GFPR), and glutamine 92 each bind AMP. Residues 126-163 (GRRACLNCGATYHIVFNPTKVEGKCDACGADTVLRDDD) form an LID region. ATP is bound at residue arginine 127. 2 residues coordinate Zn(2+): cysteine 130 and cysteine 133. 136-137 (TY) lines the ATP pocket. Positions 150 and 153 each coordinate Zn(2+). The AMP site is built by arginine 160 and arginine 171. Residue lysine 199 participates in ATP binding.

The protein belongs to the adenylate kinase family. As to quaternary structure, monomer.

Its subcellular location is the cytoplasm. It carries out the reaction AMP + ATP = 2 ADP. Its pathway is purine metabolism; AMP biosynthesis via salvage pathway; AMP from ADP: step 1/1. In terms of biological role, catalyzes the reversible transfer of the terminal phosphate group between ATP and AMP. Plays an important role in cellular energy homeostasis and in adenine nucleotide metabolism. The polypeptide is Adenylate kinase (Agathobacter rectalis (strain ATCC 33656 / DSM 3377 / JCM 17463 / KCTC 5835 / VPI 0990) (Eubacterium rectale)).